Consider the following 847-residue polypeptide: E4 SUMO-protein ligase PIAL1 (847 aa).

An interacting domain (IND), required for interaction with MOM1 and PIAL2 region spans residues valine 113 to aspartate 271. The SP-RING-type zinc finger occupies serine 268 to arginine 349. Zn(2+)-binding residues include cysteine 299, histidine 301, cysteine 322, and cysteine 325. 7 tandem repeats follow at residues glutamine 569–aspartate 591, glutamine 592–asparagine 614, glutamine 615–aspartate 637, histidine 638–aspartate 659, glutamine 660–histidine 682, glutamine 683–aspartate 705, and glutamine 706–aspartate 728. The interval glutamine 569 to aspartate 728 is 7 X 23 AA approximate tandem repeats.

Belongs to the PIAL protein ligase family. As to quaternary structure, homodimer. Interacts with MOM1 and PIAL2 to form a high molecular mass complex which mediates transcriptional gene silencing at heterochromatin regions. In terms of tissue distribution, expressed in leaves, stems and flowers, and, at low levels, in siliques and old leaves.

Its subcellular location is the nucleus. It participates in protein modification; protein sumoylation. In terms of biological role, together with MOM1 and PIAL2, regulates transcriptional gene silencing (TGS) independently of changes in DNA methylation. E4-type SUMO ligase that promotes SUMO chain formation in a SCE1-dependent manner and thus contributes to a pathway for proteolytic removal of sumoylation substrates. Involved in stress responses (e.g. osmotic, salt and abscisic acid ABA) and sulfur metabolism. The chain is E4 SUMO-protein ligase PIAL1 from Arabidopsis thaliana (Mouse-ear cress).